Reading from the N-terminus, the 342-residue chain is MTKSLFRQSFLFDSLDLDHPMVAQTVRTEQGVTLKLHQRGVLEVIPAQTDAATKNMVISCGVHGDETAPMELLDKWIDDIVSGFQPVAERCLFILAHPQATVRHVRFIEQNLNRLFDDKPHTPSTELAIADNLKVLLKQFFANTDEHSRWHLDLHCAIRGSKHYSFAVSPKARHPVRSRSLMQFIEQAHIEAVMLSNAPSSTFSWYSAEHYAAQALTLELGQVARLGENLLDRLLAFDLAMRDLISRHKPEHLPRKSVMYRVSRTIVRLHDDFDFRFSDDVENFTAFMHGEVFGHDGDKPLMAKNEGEAIVFPNRKVAIGQRAALMVCKVNTRYEDDQLVYD.

His63, Glu66, and His155 together coordinate Zn(2+). Glu219 is a catalytic residue.

Belongs to the AspA/AstE family. Succinylglutamate desuccinylase subfamily. It depends on Zn(2+) as a cofactor.

It carries out the reaction N-succinyl-L-glutamate + H2O = L-glutamate + succinate. The protein operates within amino-acid degradation; L-arginine degradation via AST pathway; L-glutamate and succinate from L-arginine: step 5/5. Transforms N(2)-succinylglutamate into succinate and glutamate. The chain is Succinylglutamate desuccinylase from Vibrio cholerae serotype O1 (strain ATCC 39541 / Classical Ogawa 395 / O395).